A 63-amino-acid polypeptide reads, in one-letter code: Large ribosomal subunit protein uL29 (63 aa).

This sequence belongs to the universal ribosomal protein uL29 family.

The protein is Large ribosomal subunit protein uL29 of Marinomonas sp. (strain MWYL1).